A 954-amino-acid chain; its full sequence is Glycine dehydrogenase (decarboxylating) (954 aa).

The residue at position 700 (lysine 700) is an N6-(pyridoxal phosphate)lysine.

This sequence belongs to the GcvP family. The glycine cleavage system is composed of four proteins: P, T, L and H. Requires pyridoxal 5'-phosphate as cofactor.

The enzyme catalyses N(6)-[(R)-lipoyl]-L-lysyl-[glycine-cleavage complex H protein] + glycine + H(+) = N(6)-[(R)-S(8)-aminomethyldihydrolipoyl]-L-lysyl-[glycine-cleavage complex H protein] + CO2. In terms of biological role, the glycine cleavage system catalyzes the degradation of glycine. The P protein binds the alpha-amino group of glycine through its pyridoxal phosphate cofactor; CO(2) is released and the remaining methylamine moiety is then transferred to the lipoamide cofactor of the H protein. This chain is Glycine dehydrogenase (decarboxylating), found in Dinoroseobacter shibae (strain DSM 16493 / NCIMB 14021 / DFL 12).